Consider the following 312-residue polypeptide: Methionyl-tRNA formyltransferase (312 aa).

111 to 114 contributes to the (6S)-5,6,7,8-tetrahydrofolate binding site; it reads SLLP.

The protein belongs to the Fmt family.

It catalyses the reaction L-methionyl-tRNA(fMet) + (6R)-10-formyltetrahydrofolate = N-formyl-L-methionyl-tRNA(fMet) + (6S)-5,6,7,8-tetrahydrofolate + H(+). Attaches a formyl group to the free amino group of methionyl-tRNA(fMet). The formyl group appears to play a dual role in the initiator identity of N-formylmethionyl-tRNA by promoting its recognition by IF2 and preventing the misappropriation of this tRNA by the elongation apparatus. The protein is Methionyl-tRNA formyltransferase of Myxococcus xanthus (strain DK1622).